Consider the following 359-residue polypeptide: Peptide chain release factor 1 (359 aa).

Gln-235 bears the N5-methylglutamine mark. Residues 283 to 294 (SKADEERSESRK) are compositionally biased toward basic and acidic residues. The disordered stretch occupies residues 283 to 309 (SKADEERSESRKSQVGSGDRSERIRTY).

It belongs to the prokaryotic/mitochondrial release factor family. Methylated by PrmC. Methylation increases the termination efficiency of RF1.

It is found in the cytoplasm. In terms of biological role, peptide chain release factor 1 directs the termination of translation in response to the peptide chain termination codons UAG and UAA. This Mesorhizobium japonicum (strain LMG 29417 / CECT 9101 / MAFF 303099) (Mesorhizobium loti (strain MAFF 303099)) protein is Peptide chain release factor 1.